Consider the following 97-residue polypeptide: Cystatin-A (97 aa).

The residue at position 1 (Met-1) is an N-acetylmethionine. A Secondary area of contact motif is present at residues 46 to 50; the sequence is QVVAG.

Belongs to the cystatin family.

The protein resides in the cytoplasm. In terms of biological role, this is an intracellular thiol proteinase inhibitor. In Mus musculus (Mouse), this protein is Cystatin-A (Csta).